We begin with the raw amino-acid sequence, 335 residues long: Urokinase plasminogen activator surface receptor (335 aa).

The signal sequence occupies residues 1 to 22 (MGHPLLLPLLLLLHTCVPASWG). UPAR/Ly6 domains lie at 23–114 (LRCM…RSRY), 115–213 (LECI…PQNG), and 214–305 (HQCY…YRKG). Disulfide bonds link cysteine 25-cysteine 46, cysteine 28-cysteine 34, and cysteine 39-cysteine 67. N-linked (GlcNAc...) asparagine glycosylation is present at asparagine 74. 11 disulfide bridges follow: cysteine 93-cysteine 98, cysteine 117-cysteine 144, cysteine 120-cysteine 127, cysteine 137-cysteine 169, cysteine 175-cysteine 192, cysteine 193-cysteine 198, cysteine 216-cysteine 244, cysteine 219-cysteine 227, cysteine 237-cysteine 263, cysteine 269-cysteine 287, and cysteine 288-cysteine 293. N-linked (GlcNAc...) asparagine glycosylation is found at asparagine 184, asparagine 194, asparagine 222, and asparagine 255. The GPI-anchor amidated glycine moiety is linked to residue glycine 305. The propeptide at 306 to 335 (AAPQPGPAHLSLTITLLMTARLWGGTLLWT) is removed in mature form.

In terms of assembly, monomer. Interacts (via the UPAR/Ly6 domains) with SRPX2. Interacts with MRC2. Interacts with FAP (seprase); the interaction occurs at the cell surface of invadopodia membrane. Interacts with SORL1 (via N-terminal ectodomain); this interaction decreases PLAUR internalization. The ternary complex composed of PLAUR-PLAU-SERPINE1 also interacts with SORL1.

It localises to the cell membrane. The protein localises to the cell projection. The protein resides in the invadopodium membrane. Its function is as follows. Acts as a receptor for urokinase plasminogen activator. Plays a role in localizing and promoting plasmin formation. Mediates the proteolysis-independent signal transduction activation effects of U-PA. It is subject to negative-feedback regulation by U-PA which cleaves it into an inactive form. The protein is Urokinase plasminogen activator surface receptor (PLAUR) of Chlorocebus aethiops (Green monkey).